An 81-amino-acid chain; its full sequence is Sulfur carrier protein TusA (81 aa).

Cysteine 19 acts as the Cysteine persulfide intermediate in catalysis.

Belongs to the sulfur carrier protein TusA family. Interacts with IscS.

Its subcellular location is the cytoplasm. Its pathway is tRNA modification. Functionally, sulfur carrier protein involved in sulfur trafficking in the cell. Part of a sulfur-relay system required for 2-thiolation during synthesis of 2-thiouridine of the modified wobble base 5-methylaminomethyl-2-thiouridine (mnm(5)s(2)U) in tRNA. Interacts with IscS and stimulates its cysteine desulfurase activity. Accepts an activated sulfur from IscS, which is then transferred to TusD, and thus determines the direction of sulfur flow from IscS to 2-thiouridine formation. Also appears to be involved in sulfur transfer for the biosynthesis of molybdopterin. This Escherichia coli O17:K52:H18 (strain UMN026 / ExPEC) protein is Sulfur carrier protein TusA.